A 495-amino-acid chain; its full sequence is Transmembrane protein 161A (495 aa).

Positions 1–28 (MALMGVQLVVSLLAVSIMQRMAPHLSFA) are cleaved as a signal peptide. Over 29–99 (RWLLCNGSLL…VNVMDALVLR (71 aa)) the chain is Extracellular. Asn-34 is a glycosylation site (N-linked (GlcNAc...) asparagine). The chain crosses the membrane as a helical span at residues 100 to 120 (FFVEYQWLIDFAVYATGIYLF). Topologically, residues 121–135 (TEGYYSVVDASKEVN) are cytoplasmic. The chain crosses the membrane as a helical span at residues 136–156 (IASIWCVLTVLFCLRTLYLLM). At 157–167 (SHYFLSEEGGE) the chain is on the extracellular side. The helical transmembrane segment at 168–188 (RSVCLAFGFLSLLIAMLVLVV) threads the bilayer. The Cytoplasmic segment spans residues 189-227 (REDYLEFGLEPGFTSLFDNFEVFARKQGYEWSVPFTKLS). Residues 228–248 (VKLGLAVICAFIGALLAFPGL) traverse the membrane as a helical segment. Topologically, residues 249 to 265 (RLAQTHLDAVQMNADRP) are extracellular. A helical transmembrane segment spans residues 266 to 286 (MIQILLHMSFLSPLVIIVMWI). The Cytoplasmic segment spans residues 287–305 (KPIARDFLGNAPMGKTSVT). A helical transmembrane segment spans residues 306–326 (LLSSSAFSSVRLWTIVVLCVL). Topologically, residues 327–367 (RLLLTRYHLQAYLNLAQKWVEQMKKEAGRIAAIDIQRKVTR) are extracellular. Residues 368 to 388 (IFCYLTVVTLQYLIPILLVLF) form a helical membrane-spanning segment. Residues 389–465 (STLALKSLGD…ALLTPIFFRG (77 aa)) lie on the Cytoplasmic side of the membrane. Residues 466–486 (IFAFLTWWVAACQLISSLFGI) form a helical membrane-spanning segment. At 487–495 (YFHQYLMHN) the chain is on the extracellular side.

Belongs to the TMEM161 family.

The protein localises to the membrane. In terms of biological role, may play a role in protection against oxidative stress. The chain is Transmembrane protein 161A (tmem161a) from Danio rerio (Zebrafish).